Consider the following 1162-residue polypeptide: PAN2-PAN3 deadenylation complex catalytic subunit PAN2 (1162 aa).

4 WD repeats span residues 27-66 (AKEK…YTRH), 153-193 (NTVQ…VVKT), 196-233 (GHSC…NVYD), and 300-339 (HPCQ…TGFT). The linker stretch occupies residues 341–491 (TATTILEYPD…LMNYKPSNDR (151 aa)). Residues 401 to 443 (VPLPPKSSAASSSHTALSTSSDSRPNTARSGNPSSGGQKYRLL) form a disordered region. Residues 407–423 (SSAASSSHTALSTSSDS) show a composition bias toward low complexity. The span at 424–437 (RPNTARSGNPSSGG) shows a compositional bias: polar residues. The 413-residue stretch at 492–904 (EVPPAFTKLQ…TPEIAIYSDA (413 aa)) folds into the USP domain. The Exonuclease domain occupies 956–1126 (VALDAEFVAL…IEDAYTALVL (171 aa)). Residues Asp959, Glu961, Asp1068, and Asp1119 each coordinate a divalent metal cation.

This sequence belongs to the peptidase C19 family. PAN2 subfamily. As to quaternary structure, forms a heterotrimer with an asymmetric homodimer of the regulatory subunit PAN3 to form the poly(A)-nuclease (PAN) deadenylation complex. Requires a divalent metal cation as cofactor.

Its subcellular location is the cytoplasm. The catalysed reaction is Exonucleolytic cleavage of poly(A) to 5'-AMP.. Its activity is regulated as follows. Positively regulated by the regulatory subunit PAN3. In terms of biological role, catalytic subunit of the poly(A)-nuclease (PAN) deadenylation complex, one of two cytoplasmic mRNA deadenylases involved in mRNA turnover. PAN specifically shortens poly(A) tails of RNA and the activity is stimulated by poly(A)-binding protein PAB1. PAN deadenylation is followed by rapid degradation of the shortened mRNA tails by the CCR4-NOT complex. Deadenylated mRNAs are then degraded by two alternative mechanisms, namely exosome-mediated 3'-5' exonucleolytic degradation, or deadenylation-dependent mRNA decaping and subsequent 5'-3' exonucleolytic degradation by XRN1. May also be involved in post-transcriptional maturation of mRNA poly(A) tails. This Eremothecium gossypii (strain ATCC 10895 / CBS 109.51 / FGSC 9923 / NRRL Y-1056) (Yeast) protein is PAN2-PAN3 deadenylation complex catalytic subunit PAN2.